A 321-amino-acid polypeptide reads, in one-letter code: UDP-N-acetyl-alpha-D-glucosaminuronate decarboxylase (321 aa).

Residues glycine 12, phenylalanine 13, isoleucine 14, aspartate 33, asparagine 34, tyrosine 36, glycine 38, leucine 76, threonine 95, alanine 117, tyrosine 148, and lysine 152 each coordinate NAD(+). Residue tyrosine 148 is the Proton acceptor of the active site.

This sequence belongs to the NAD(P)-dependent epimerase/dehydratase family. As to quaternary structure, homodimer. Requires NAD(+) as cofactor.

It carries out the reaction UDP-2-acetamido-2-deoxy-alpha-D-glucuronate + H(+) = UDP-N-acetyl-alpha-D-xylosamine + CO2. Its activity is regulated as follows. Activity is completely inhibited by NADH but not by NADPH. In terms of biological role, decarboxylase involved in the biosynthesis of the nucleotide-sugar UDP-N-acetylxylosamine (UDP-XylNAc). Catalyzes the NAD-dependent decarboxylation of UDP-N-acetylglucosaminuronic acid (UDP-GlcNAcA) to UDP-XylNAc. Cannot use other UDP-uronates, such as UDP-glucuronic acid (UDP-GlcA) and UDP-galacturonic acid (UDP-GalA). In Bacillus cytotoxicus (strain DSM 22905 / CIP 110041 / 391-98 / NVH 391-98), this protein is UDP-N-acetyl-alpha-D-glucosaminuronate decarboxylase.